The sequence spans 232 residues: Small ribosomal subunit protein uS3 (232 aa).

In terms of domain architecture, KH type-2 spans 39-107 (VRQYLTKELK…PAQINIAEVR (69 aa)).

It belongs to the universal ribosomal protein uS3 family. In terms of assembly, part of the 30S ribosomal subunit. Forms a tight complex with proteins S10 and S14.

Functionally, binds the lower part of the 30S subunit head. Binds mRNA in the 70S ribosome, positioning it for translation. In Aliivibrio fischeri (strain MJ11) (Vibrio fischeri), this protein is Small ribosomal subunit protein uS3.